We begin with the raw amino-acid sequence, 143 residues long: uncharacterized protein (143 aa).

The active site involves Cys-12.

Belongs to the ArsC family.

This is an uncharacterized protein from Rhodospirillum rubrum.